A 295-amino-acid polypeptide reads, in one-letter code: Small ribosomal subunit protein uS2 (295 aa).

The protein belongs to the universal ribosomal protein uS2 family. As to quaternary structure, component of the small ribosomal subunit. Mature ribosomes consist of a small (40S) and a large (60S) subunit. The 40S subunit contains about 33 different proteins and 1 molecule of RNA (18S). The 60S subunit contains about 49 different proteins and 3 molecules of RNA (25S, 5.8S and 5S). Interacts with RPS21.

The protein localises to the cytoplasm. Functionally, required for the assembly and/or stability of the 40S ribosomal subunit. Required for the processing of the 20S rRNA-precursor to mature 18S rRNA in a late step of the maturation of 40S ribosomal subunits. The polypeptide is Small ribosomal subunit protein uS2 (Paracoccidioides brasiliensis (strain Pb03)).